Consider the following 778-residue polypeptide: ATP-dependent RNA helicase dbp7 (778 aa).

The disordered stretch occupies residues 20 to 144; it reads QTKIKGGSWR…PMEDAKPTNA (125 aa). Positions 47-58 are enriched in basic and acidic residues; sequence RTADGDGNKDGN. The segment covering 61 to 72 has biased composition (polar residues); that stretch reads GPRNPNRIQVSG. A compositionally biased stretch (gly residues) spans 92 to 110; the sequence is QAHGQGSGQSKGPKKGQGG. Over residues 125–140 the composition is skewed to basic and acidic residues; the sequence is NAVEEDKNDEPMEDAK. The short motif at 151 to 180 is the Q motif element; the sequence is DTFTNLGLSPTLAAHLLTKLELKAPTAIQK. The region spanning 184–385 is the Helicase ATP-binding domain; that stretch reads TQLLKEETDA…EISLKDAVHI (202 aa). Position 197–204 (197–204) interacts with ATP; that stretch reads AETGSGKT. The short motif at 321–324 is the DEAD box element; sequence DEGD. Residues 411–625 enclose the Helicase C-terminal domain; it reads QLKQSYAIVA…ALTRSTTDDI (215 aa). Over residues 470 to 479 the composition is skewed to acidic residues; the sequence is LEGDNPDEGS. 2 disordered regions span residues 470–503 and 700–778; these read LEGD…TVAP and GKIN…FNLA. 2 stretches are compositionally biased toward basic and acidic residues: residues 480 to 492 and 709 to 724; these read DSEH…KEKP and PGKE…ERKS.

The protein belongs to the DEAD box helicase family. DDX31/DBP7 subfamily.

The protein localises to the nucleus. It is found in the nucleolus. The catalysed reaction is ATP + H2O = ADP + phosphate + H(+). ATP-binding RNA helicase involved in the biogenesis of 60S ribosomal subunits and is required for the normal formation of 25S and 5.8S rRNAs. This is ATP-dependent RNA helicase dbp7 (dbp7) from Emericella nidulans (strain FGSC A4 / ATCC 38163 / CBS 112.46 / NRRL 194 / M139) (Aspergillus nidulans).